The sequence spans 443 residues: Thymidine phosphorylase (443 aa).

Belongs to the thymidine/pyrimidine-nucleoside phosphorylase family. Homodimer.

It catalyses the reaction thymidine + phosphate = 2-deoxy-alpha-D-ribose 1-phosphate + thymine. It functions in the pathway pyrimidine metabolism; dTMP biosynthesis via salvage pathway; dTMP from thymine: step 1/2. Its function is as follows. The enzymes which catalyze the reversible phosphorolysis of pyrimidine nucleosides are involved in the degradation of these compounds and in their utilization as carbon and energy sources, or in the rescue of pyrimidine bases for nucleotide synthesis. This is Thymidine phosphorylase from Aeromonas hydrophila subsp. hydrophila (strain ATCC 7966 / DSM 30187 / BCRC 13018 / CCUG 14551 / JCM 1027 / KCTC 2358 / NCIMB 9240 / NCTC 8049).